A 162-amino-acid polypeptide reads, in one-letter code: Tripartite terminase subunit 2 (162 aa).

The tract at residues 1 to 58 (MYGRSNAPGCQPPVRAHPPSSPMTSRLQLAAMEQNASDAALSGMQQARSRQASPKRLR) is disordered. The segment covering 43 to 52 (GMQQARSRQA) has biased composition (polar residues).

The protein belongs to the herpesviridae TRM2 protein family. Associates with TRM1 and TRM3 to form the tripartite terminase complex.

It is found in the host nucleus. Functionally, component of the molecular motor that translocates viral genomic DNA in empty capsid during DNA packaging. Forms a tripartite terminase complex together with TRM1 and TRM3 in the host cytoplasm. Once the complex reaches the host nucleus, it interacts with the capsid portal vertex. This portal forms a ring in which genomic DNA is translocated into the capsid. This is Tripartite terminase subunit 2 from Equine herpesvirus 1 (strain Ab4p) (EHV-1).